Here is a 365-residue protein sequence, read N- to C-terminus: Fatty acid hydroxylase vlmA (365 aa).

Positions 20 to 41 (TTIKRRQNDKTKTPKTKPVSKI) are disordered. Residue asparagine 47 is glycosylated (N-linked (GlcNAc...) asparagine). Helical transmembrane passes span 62-82 (ILLQ…VLSI), 89-109 (VHPF…FRFL), 144-164 (LNWS…LVAY), and 179-199 (WWAW…FYYY). The region spanning 189 to 335 (LYPIILDFYY…TRIWDRLFGT (147 aa)) is the Fatty acid hydroxylase domain.

It belongs to the sterol desaturase family. TMEM195 subfamily.

It is found in the membrane. The protein operates within secondary metabolite biosynthesis. In terms of biological role, fatty acid hydroxylase; part of the gene cluster that mediates the biosynthesis of verlamelin, a lipopeptide that exhibits antifungal activity against plant pathogenic fungi. Verlamelin is a cyclic hexadepsipeptide and is bridged by ester bonding between a 5-hydroxytetradecanoic acid moiety and a carboxyl group on the terminal Val of amide-bonded tetradecanoyl-hexapeptide D-allo-Thr-D-Ala-L-Pro-L-Gln-D-Tyr-L-Val. VlmA and vlmB are altogether regarded as essential components in the biosynthesis of 5-hydroxytetradecanoic acid. VlmA catalyzes the hydroxylation at position C5 of tetradecanoic acid produced in primary metabolism, while the precise function of vlmB still remains to be solved. To be loaded onto the waiting NRPS, 5-hydroxytetradecanoic acid is activated in the form of acyladenylate by the AMP-dependent ligase vlmC. VlmS seems to accept the fatty-acyl intermediate onto the initial module to further elongate amino acid residues by the downstream modules. In addition, in the last module at its C-terminus, vlmS contains a surplus condensation (C) domain that may be involved in cyclization, the last step to form verlamelin. In Lecanicillium sp, this protein is Fatty acid hydroxylase vlmA.